The primary structure comprises 503 residues: MSGTPRTMPPLMMDWAEQPNGRAKPRGMVISRVPYLPWYLLGAVRVGGVSNARPNSRPYSAEQADFGRISQTALCRYRSMPVRNPTPYGVGTQVWRAVVLHHLPLTAAMAAAPFISLLQGDQFLADTPIPGSAVIPNSGNLFPKWADKLSPTAVETWLFDAMAEDGSAAFTVSFFRDGSQAPASFRAAINAAWSDGTVWSQHLVVPVSVVTSDGPDVGHGHVAGVWRTEEPQSNDTTRTTASFDVAADLSTTTVVFDAPGRITGSLTHRSLGYPTLPQSDREAEVAPGAYWFRPIAMANATVDLTFHIDDPTNPDKKTEKRMVLGPEQGAFGGMDRSWLPMVWGKEATDALFVRAQAGPYVMAVMRLVSKPHKYYQNTVNAALYRDGKIVSNALRSLPPDRRDTAATADAVRTEKLYDGDGLVAKYRDKNVGYRLEFRSAGPEREKWSFDLRHHQAWWAKPTSRPGPDGTGNSGFVVEVTGGLVGSEESVHGWGMTGEVELSD.

The protein belongs to the Diels-Alderase family.

It catalyses the reaction (2S)-3-[(2S)-3,5-dioxo-4-[(2E,4R,6R,8E,10E,12E)-4,6,12-trimethyltetradeca-2,8,10,12-tetraenoyl]pyrrolidin-2-yl]-2-hydroxy-2-methylpropanoate = sch 210972. Its pathway is secondary metabolite biosynthesis. In terms of biological role, diels-Alderase; part of the gene cluster that mediates the biosynthesis of the tetramic acid Sch210972, a potential anti-HIV fungal natural product that contains a decalin core. The PKS module of cghG together with the enoylreductase cghC catalyze the formation of the polyketide unit which is then conjugated to 4-hydroxyl-4-methyl glutamate (HMG) by the condensation domain of the cghG NRPS module. One unique structural feature of Sch210972 is the tetramic acid motif proposed to be derived from the non-proteinogenic amino acid HMG, by a Dieckmann-type condensation catalyzed by the reductase domain of cghG. The aldolase cghB catalyzes the aldol condensation of 2 molecules of pyruvic acid to yield the intermediate 4-hydroxyl-4-methyl-2-oxoglutarate (HMOG), which can then be stereoselectively transaminated by an unidentified enzyme to form HMG. The Diels-Alderase cghA then uses the Dieckmann product released by cghG as substrate and catalyzes the Diels-Alder cycloaddition to form the decalin ring of Sch210972. CghA also suppresses the nonenzymatic formation of the alternative stereoisomer. In Chaetomium globosum (strain ATCC 6205 / CBS 148.51 / DSM 1962 / NBRC 6347 / NRRL 1970) (Soil fungus), this protein is Diels-Alderase cghA.